Consider the following 506-residue polypeptide: Histidine ammonia-lyase (506 aa).

A cross-link (5-imidazolinone (Ala-Gly)) is located at residues 143–145; that stretch reads ASG. Serine 144 is subject to 2,3-didehydroalanine (Ser).

Belongs to the PAL/histidase family. In terms of processing, contains an active site 4-methylidene-imidazol-5-one (MIO), which is formed autocatalytically by cyclization and dehydration of residues Ala-Ser-Gly.

It localises to the cytoplasm. The enzyme catalyses L-histidine = trans-urocanate + NH4(+). It participates in amino-acid degradation; L-histidine degradation into L-glutamate; N-formimidoyl-L-glutamate from L-histidine: step 1/3. The protein is Histidine ammonia-lyase of Salmonella choleraesuis (strain SC-B67).